A 303-amino-acid polypeptide reads, in one-letter code: Deoxyhypusine hydroxylase (303 aa).

M1 is subject to N-acetylmethionine. HEAT-like PBS-type repeat units follow at residues 23–49, 54–80, 87–113, 175–201, 206–232, and 239–265; these read ARFR…AFDD, LKHE…VLRD, VRHE…YSTD, DRYR…GLRC, FRHE…ALAQ, and VRHE…HVAD. Residues H56, H89, and E90 each contribute to the Fe cation site. The Fe cation site is built by H208, H241, and E242.

Belongs to the deoxyhypusine hydroxylase family. The cofactor is Fe(2+).

The catalysed reaction is [eIF5A protein]-deoxyhypusine + AH2 + O2 = [eIF5A protein]-hypusine + A + H2O. It functions in the pathway protein modification; eIF5A hypusination. Functionally, catalyzes the hydroxylation of the N(6)-(4-aminobutyl)-L-lysine intermediate produced by deoxyhypusine synthase/DHPS on a critical lysine of the eukaryotic translation initiation factor 5A/eIF-5A. This is the second step of the post-translational modification of that lysine into an unusual amino acid residue named hypusine. Hypusination is unique to mature eIF-5A factor and is essential for its function. This chain is Deoxyhypusine hydroxylase, found in Bos taurus (Bovine).